A 582-amino-acid polypeptide reads, in one-letter code: Hydrogen peroxide stress regulator 1 (582 aa).

4 disordered regions span residues 24-55, 107-154, 347-366, and 375-422; these read SPFA…HNSS, YPSA…GISK, TSYN…SGET, and NTSG…GGKS. The segment covering 107-125 has biased composition (polar residues); it reads YPSASFSTSQHPSQVYNDG. Positions 126–143 are enriched in low complexity; that stretch reads STLNSNNTTQQLNNNNGF. The span at 375 to 392 shows a compositional bias: polar residues; sequence NTSGRSPNSMEATEQIGT. The segment at 423-446 adopts a C2H2-type 1 zinc-finger fold; that stretch reads FVCPECSKKFKRSEHLRRHIRSLH. Residues 452–473 form a C2H2-type 2; atypical zinc finger; it reads FVCICGKRFSRRDNLRQHERLH.

The protein localises to the nucleus. In terms of biological role, transcription factor that globally supports gene expression in response to hydrogen peroxide. The chain is Hydrogen peroxide stress regulator 1 (hsr1) from Schizosaccharomyces pombe (strain 972 / ATCC 24843) (Fission yeast).